A 24-amino-acid polypeptide reads, in one-letter code: Homotarsinin (24 aa).

Residue Arg24 is modified to Arginine amide.

In terms of assembly, homodimer; disulfide-linked. In terms of tissue distribution, expressed by the skin glands.

Its subcellular location is the secreted. In terms of biological role, antimicrobial peptide. Active against Gram-negative bacteria E.coli ATCC 25922 (MIC=1.5 uM) and P.aeruginosa ATTC 27853 (MIC=23.2 uM) and against Gram-positive bacterium S.aureus ATCC 29313 (MIC=11.6 uM). Has no hemolytic activity. Associates with and disrupts membranes in vitro. The polypeptide is Homotarsinin (Phyllomedusa tarsius (Brownbelly leaf frog)).